The following is a 286-amino-acid chain: Light-independent protochlorophyllide reductase iron-sulfur ATP-binding protein (286 aa).

Residues 10–15 (GIGKST) and lysine 39 each bind ATP. Serine 14 provides a ligand contact to Mg(2+). [4Fe-4S] cluster-binding residues include cysteine 95 and cysteine 129. 180 to 181 (NR) lines the ATP pocket.

It belongs to the NifH/BchL/ChlL family. In terms of assembly, homodimer. Protochlorophyllide reductase is composed of three subunits; ChlL, ChlN and ChlB. Requires [4Fe-4S] cluster as cofactor.

It catalyses the reaction chlorophyllide a + oxidized 2[4Fe-4S]-[ferredoxin] + 2 ADP + 2 phosphate = protochlorophyllide a + reduced 2[4Fe-4S]-[ferredoxin] + 2 ATP + 2 H2O. The protein operates within porphyrin-containing compound metabolism; chlorophyll biosynthesis (light-independent). In terms of biological role, component of the dark-operative protochlorophyllide reductase (DPOR) that uses Mg-ATP and reduced ferredoxin to reduce ring D of protochlorophyllide (Pchlide) to form chlorophyllide a (Chlide). This reaction is light-independent. The L component serves as a unique electron donor to the NB-component of the complex, and binds Mg-ATP. This chain is Light-independent protochlorophyllide reductase iron-sulfur ATP-binding protein, found in Synechococcus elongatus (strain ATCC 33912 / PCC 7942 / FACHB-805) (Anacystis nidulans R2).